A 190-amino-acid polypeptide reads, in one-letter code: CASP-like protein 1E2 (190 aa).

Over residues 1-12 the composition is skewed to low complexity; the sequence is MENEGKNNMNGM. Residues 1-24 form a disordered region; sequence MENEGKNNMNGMEMEKGKRESRSR. Over 1–28 the chain is Cytoplasmic; it reads MENEGKNNMNGMEMEKGKRESRSRKGVE. Over residues 13–24 the composition is skewed to basic and acidic residues; sequence EMEKGKRESRSR. Residues 29-49 traverse the membrane as a helical segment; that stretch reads LTMRVLALVLTMAAATVLGVA. The Extracellular portion of the chain corresponds to 50 to 83; that stretch reads KQTKVVSIKLIPALPPLDITTTAKASYLSAFVYN. A helical transmembrane segment spans residues 84 to 104; it reads ISANAIACGYTAISIAILMIS. Over 105–111 the chain is Cytoplasmic; that stretch reads RGRRSKK. The helical transmembrane segment at 112–132 threads the bilayer; that stretch reads LLMAVLLGDLVMVALLFSGTG. Residues 133-163 are Extracellular-facing; the sequence is AASAIGLMGLQGNKHVMWNKVCGVFGKFCHR. The helical transmembrane segment at 164 to 184 threads the bilayer; sequence AAPSLPLTFLAAVVFMFLVVL. Residues 185-190 are Cytoplasmic-facing; sequence DAIKLP.

The protein belongs to the Casparian strip membrane proteins (CASP) family. In terms of assembly, homodimer and heterodimers.

The protein localises to the cell membrane. This chain is CASP-like protein 1E2, found in Arabidopsis lyrata subsp. lyrata (Lyre-leaved rock-cress).